The chain runs to 230 residues: Large ribosomal subunit protein uL1 (230 aa).

The protein belongs to the universal ribosomal protein uL1 family. As to quaternary structure, part of the 50S ribosomal subunit.

Binds directly to 23S rRNA. The L1 stalk is quite mobile in the ribosome, and is involved in E site tRNA release. In terms of biological role, protein L1 is also a translational repressor protein, it controls the translation of the L11 operon by binding to its mRNA. This is Large ribosomal subunit protein uL1 from Caldicellulosiruptor bescii (strain ATCC BAA-1888 / DSM 6725 / KCTC 15123 / Z-1320) (Anaerocellum thermophilum).